We begin with the raw amino-acid sequence, 358 residues long: D-alanine--D-alanine ligase (358 aa).

The ATP-grasp domain maps to 136 to 341 (KYILQAAGVP…YGDLIEELIQ (206 aa)). 169 to 224 (EGSLLYPMFVKPANMGSSVGISKAENREELQNALALAYQYDSRAIVEQGIEAREIE) provides a ligand contact to ATP. Mg(2+) is bound by residues aspartate 295, glutamate 308, and asparagine 310.

This sequence belongs to the D-alanine--D-alanine ligase family. Mg(2+) serves as cofactor. It depends on Mn(2+) as a cofactor.

The protein resides in the cytoplasm. The catalysed reaction is 2 D-alanine + ATP = D-alanyl-D-alanine + ADP + phosphate + H(+). It participates in cell wall biogenesis; peptidoglycan biosynthesis. In terms of biological role, cell wall formation. The sequence is that of D-alanine--D-alanine ligase from Enterococcus hirae (strain ATCC 9790 / DSM 20160 / JCM 8729 / LMG 6399 / NBRC 3181 / NCIMB 6459 / NCDO 1258 / NCTC 12367 / WDCM 00089 / R).